The chain runs to 172 residues: RNA pyrophosphohydrolase (172 aa).

The Nudix hydrolase domain maps to 6 to 149 (GFRANVGIII…KRDVYRKVMK (144 aa)). The Nudix box motif lies at 38–59 (GGVDEGETPEEAMFRELYEEVG).

This sequence belongs to the Nudix hydrolase family. RppH subfamily. A divalent metal cation is required as a cofactor.

Accelerates the degradation of transcripts by removing pyrophosphate from the 5'-end of triphosphorylated RNA, leading to a more labile monophosphorylated state that can stimulate subsequent ribonuclease cleavage. This Shewanella sediminis (strain HAW-EB3) protein is RNA pyrophosphohydrolase.